The chain runs to 127 residues: Anti-adapter protein IraD (127 aa).

The protein belongs to the GpW/Gp25 family. IraD subfamily. In terms of assembly, interacts with RssB.

The protein resides in the cytoplasm. In terms of biological role, inhibits RpoS proteolysis by regulating RssB activity, thereby increasing the stability of the sigma stress factor RpoS during oxidative stress. Its effect on RpoS stability is due to its interaction with RssB, which probably blocks the interaction of RssB with RpoS, and the consequent delivery of the RssB-RpoS complex to the ClpXP protein degradation pathway. In Escherichia coli O6:K15:H31 (strain 536 / UPEC), this protein is Anti-adapter protein IraD.